Here is a 317-residue protein sequence, read N- to C-terminus: Glycine--tRNA ligase alpha subunit (317 aa).

This sequence belongs to the class-II aminoacyl-tRNA synthetase family. As to quaternary structure, tetramer of two alpha and two beta subunits.

The protein localises to the cytoplasm. The enzyme catalyses tRNA(Gly) + glycine + ATP = glycyl-tRNA(Gly) + AMP + diphosphate. This is Glycine--tRNA ligase alpha subunit from Lactococcus lactis subsp. cremoris (strain SK11).